Consider the following 123-residue polypeptide: Large ribosomal subunit protein bL17 (123 aa).

Belongs to the bacterial ribosomal protein bL17 family. Part of the 50S ribosomal subunit. Contacts protein L32.

In Staphylococcus haemolyticus (strain JCSC1435), this protein is Large ribosomal subunit protein bL17.